Reading from the N-terminus, the 299-residue chain is 4-diphosphocytidyl-2-C-methyl-D-erythritol kinase (299 aa).

Residue Lys-18 is part of the active site. 104-114 serves as a coordination point for ATP; it reads PIASGIGGGSS. Asp-146 is an active-site residue.

It belongs to the GHMP kinase family. IspE subfamily.

The catalysed reaction is 4-CDP-2-C-methyl-D-erythritol + ATP = 4-CDP-2-C-methyl-D-erythritol 2-phosphate + ADP + H(+). It functions in the pathway isoprenoid biosynthesis; isopentenyl diphosphate biosynthesis via DXP pathway; isopentenyl diphosphate from 1-deoxy-D-xylulose 5-phosphate: step 3/6. Functionally, catalyzes the phosphorylation of the position 2 hydroxy group of 4-diphosphocytidyl-2C-methyl-D-erythritol. This chain is 4-diphosphocytidyl-2-C-methyl-D-erythritol kinase, found in Brucella melitensis biotype 1 (strain ATCC 23456 / CCUG 17765 / NCTC 10094 / 16M).